An 87-amino-acid chain; its full sequence is MVKNSVISVIFQKEKKGSVEFQVFNFTNKIRRLTSHLELHKKDYLSQRGLKKILGKRQRLLAYLAKKNRVRYKELINQLDIRETKTR.

It belongs to the universal ribosomal protein uS15 family. As to quaternary structure, part of the 30S ribosomal subunit.

The protein localises to the plastid. Its subcellular location is the chloroplast. The protein is Small ribosomal subunit protein uS15c (rps15) of Solanum tuberosum (Potato).